Reading from the N-terminus, the 233-residue chain is 3,4-dihydroxy-2-butanone 4-phosphate synthase (233 aa).

Glu-37 lines the Mg(2+) pocket. A Mn(2+)-binding site is contributed by Glu-37. Asp-41 contributes to the D-ribulose 5-phosphate binding site. S-glutathionyl cysteine is present on Cys-66. Residues Thr-92 and 150 to 154 contribute to the D-ribulose 5-phosphate site; that span reads RRGHT. His-153 is a binding site for Mg(2+). His-153 is a binding site for Mn(2+).

Homodimer. The cofactor is Mg(2+). Mn(2+) is required as a cofactor. S-glutathionylation is reversible and dependent on a glutaredoxin.

It catalyses the reaction D-ribulose 5-phosphate = (2S)-2-hydroxy-3-oxobutyl phosphate + formate + H(+). The protein operates within cofactor biosynthesis; riboflavin biosynthesis; 2-hydroxy-3-oxobutyl phosphate from D-ribulose 5-phosphate: step 1/1. Its function is as follows. Catalyzes the conversion of D-ribulose 5-phosphate to formate and 3,4-dihydroxy-2-butanone 4-phosphate. The sequence is that of 3,4-dihydroxy-2-butanone 4-phosphate synthase (RIB3) from Pyricularia oryzae (strain 70-15 / ATCC MYA-4617 / FGSC 8958) (Rice blast fungus).